The chain runs to 510 residues: NAD(P)H-quinone oxidoreductase subunit 2 B, chloroplastic (510 aa).

Transmembrane regions (helical) follow at residues 31 to 51 (FIFP…IDLT), 59 to 79 (WFYF…LFRW), 99 to 119 (IFQF…VEYI), 124 to 144 (MAIT…MFLC), 149 to 169 (LITI…LSGY), 184 to 204 (LLMG…LYGL), 229 to 249 (ISIA…LAPF), 261 to 281 (PTPV…ALAT), 295 to 315 (WHLL…LLAI), 323 to 343 (MLAY…IVGD), 354 to 374 (YMLF…LFGL), 395 to 415 (ALSL…AGFF), 418 to 438 (LYLF…IGLL), and 484 to 504 (MTVC…ILAI).

It belongs to the complex I subunit 2 family. As to quaternary structure, NDH is composed of at least 16 different subunits, 5 of which are encoded in the nucleus.

It localises to the plastid. The protein localises to the chloroplast thylakoid membrane. The enzyme catalyses a plastoquinone + NADH + (n+1) H(+)(in) = a plastoquinol + NAD(+) + n H(+)(out). The catalysed reaction is a plastoquinone + NADPH + (n+1) H(+)(in) = a plastoquinol + NADP(+) + n H(+)(out). NDH shuttles electrons from NAD(P)H:plastoquinone, via FMN and iron-sulfur (Fe-S) centers, to quinones in the photosynthetic chain and possibly in a chloroplast respiratory chain. The immediate electron acceptor for the enzyme in this species is believed to be plastoquinone. Couples the redox reaction to proton translocation, and thus conserves the redox energy in a proton gradient. This chain is NAD(P)H-quinone oxidoreductase subunit 2 B, chloroplastic, found in Hordeum vulgare (Barley).